Reading from the N-terminus, the 496-residue chain is MFS transporter cpaT (496 aa).

The tract at residues 1–45 is disordered; sequence MGHQEEPPRICKTPSGHEQGEGPAEKTSKPSTEEVGWDGPTDPAR. Residues 18-32 show a composition bias toward basic and acidic residues; sequence EQGEGPAEKTSKPST. The N-linked (GlcNAc...) asparagine glycan is linked to N48. The chain crosses the membrane as a helical span at residues 58–78; the sequence is MGIISYLTFLTPLTSSIVAPA. A glycan (N-linked (GlcNAc...) asparagine) is linked at N90. Helical transmembrane passes span 93 to 113, 130 to 150, 154 to 174, 180 to 200, and 212 to 232; these read LASF…LFLA, FIFT…ALLV, FAGI…ADMF, GVAM…GPIA, and WVFW…LFVL. N252 carries an N-linked (GlcNAc...) asparagine glycan. Helical transmembrane passes span 288–308, 325–345, 367–387, 395–415, 427–449, and 463–483; these read VALF…LFTT, GLVY…FGAL, LPPL…YGWS, IMPI…LLPI, AASA…PLAG, and SLLG…YFYG.

This sequence belongs to the major facilitator superfamily.

It localises to the membrane. Functionally, MFS transporter; part of the gene cluster that mediates the biosynthesis of the fungal neurotoxin cyclopiazonic acid (CPA), a nanomolar inhibitor of Ca(2+)-ATPase with a unique pentacyclic indole tetramic acid scaffold. This is MFS transporter cpaT from Aspergillus oryzae (Yellow koji mold).